The following is a 626-amino-acid chain: Biosynthetic arginine decarboxylase (626 aa).

Position 99 is an N6-(pyridoxal phosphate)lysine (lysine 99). 279–289 (VDVGGGLGVDY) serves as a coordination point for substrate.

This sequence belongs to the Orn/Lys/Arg decarboxylase class-II family. SpeA subfamily. The cofactor is Mg(2+). Requires pyridoxal 5'-phosphate as cofactor.

It carries out the reaction L-arginine + H(+) = agmatine + CO2. The protein operates within amine and polyamine biosynthesis; agmatine biosynthesis; agmatine from L-arginine: step 1/1. In terms of biological role, catalyzes the biosynthesis of agmatine from arginine. In Chromobacterium violaceum (strain ATCC 12472 / DSM 30191 / JCM 1249 / CCUG 213 / NBRC 12614 / NCIMB 9131 / NCTC 9757 / MK), this protein is Biosynthetic arginine decarboxylase.